The primary structure comprises 330 residues: Ornithine carbamoyltransferase (330 aa).

Carbamoyl phosphate is bound by residues 57-60 (STRT), glutamine 84, arginine 108, and 135-138 (HPTQ). L-ornithine is bound by residues asparagine 168, aspartate 232, and 236–237 (SM). Residues 273–274 (CL) and arginine 318 contribute to the carbamoyl phosphate site.

This sequence belongs to the aspartate/ornithine carbamoyltransferase superfamily. OTCase family.

The protein localises to the cytoplasm. The enzyme catalyses carbamoyl phosphate + L-ornithine = L-citrulline + phosphate + H(+). It functions in the pathway amino-acid biosynthesis; L-arginine biosynthesis; L-arginine from L-ornithine and carbamoyl phosphate: step 1/3. Functionally, reversibly catalyzes the transfer of the carbamoyl group from carbamoyl phosphate (CP) to the N(epsilon) atom of ornithine (ORN) to produce L-citrulline. The polypeptide is Ornithine carbamoyltransferase (Alkaliphilus metalliredigens (strain QYMF)).